A 395-amino-acid chain; its full sequence is Thyrotropin-releasing hormone receptor (395 aa).

Over 1 to 30 the chain is Extracellular; sequence MENGTGDEQNHTGLLLSSQEFVTAEYQVVT. 2 N-linked (GlcNAc...) asparagine glycosylation sites follow: Asn-3 and Asn-10. A helical membrane pass occupies residues 31 to 53; the sequence is ILLVLLICGLGIVGNIMVVLVVL. Residues 54–63 lie on the Cytoplasmic side of the membrane; sequence RTKHMRTPTN. Residues 64-85 traverse the membrane as a helical segment; that stretch reads CYLVSLAVADLMVLVAAGLPNI. Residues 86–101 are Extracellular-facing; it reads TESLYKSWVYGYVGCL. Residues Cys-100 and Cys-181 are joined by a disulfide bond. The chain crosses the membrane as a helical span at residues 102–123; sequence CITYLQYLGINASSFSITAFTI. Topologically, residues 124–146 are cytoplasmic; it reads ERYIAICHPIKAQFLCTFSRAKK. The chain crosses the membrane as a helical span at residues 147–170; sequence IIIFVWSFASVYCMLWFFLLDLNI. Residues 171-195 are Extracellular-facing; it reads AVYKDTTVVSCGYKVSRSYYSPIYM. The helical transmembrane segment at 196 to 217 threads the bilayer; the sequence is MDFGIFYVLPMVLATVLYGLIA. At 218–268 the chain is on the cytoplasmic side; the sequence is RILFLNPIPSDPKENSNTWKNDMAQQNKTVNSKMTNKSFNSTIASRRQVTK. The helical transmembrane segment at 269–290 threads the bilayer; sequence MLAVVVVLFAFLWMPYRTLVVV. Residues 291-298 lie on the Extracellular side of the membrane; that stretch reads NSFLSSPF. Residues 299-321 traverse the membrane as a helical segment; sequence QENWFLLFCRICIYLNSAINPVI. At 322-395 the chain is on the cytoplasmic side; the sequence is YNLMSQKFRA…IGDTCLSSEA (74 aa).

Belongs to the G-protein coupled receptor 1 family.

It is found in the cell membrane. Receptor for thyrotropin-releasing hormone (TRH). Upon ligand binding, this G-protein-coupled receptor triggers activation of the phosphatidylinositol (IP3)-calcium-protein kinase C (PKC) pathway. In Gallus gallus (Chicken), this protein is Thyrotropin-releasing hormone receptor (TRHR).